The sequence spans 776 residues: MKLVIVESPAKAKTINKYLGDEFKVIASFGHIRDLPSKKGSVLPDKNFLMEYDISDKAGKYVDAIVKEARKAEVVYLATDPDREGESISWHVAEVIKEKNKVESDDFFKRVAFNEITKKAIMNAVANPRKLDTNLVNAQQARRALDYLVGFTLSPLLWRKLPGCKSAGRVQSVALRLICDREDEIERFKSEEYWDISLKMQNSNNDLFTAKLTHVNDQKLKKFSIINEKEAKDLTQKLKLQKFYVEKIEKKQQKRQPQPPFITSSLQQEAARKLGFSAKKTMQIAQKLYEGVDIGKETIGLITYMRTDGVTLSNDAIADIRKLIDKNYGNQYLPIKPRIYQSKVKNAQEAHEAIRPTNITYTPDSLKQKLEKDYYKLYELIWHRTIACQMENVIMDLVIANLASENKEYLAKANGSIIAFDGFYKVYRESLDDEDEEDNKMLPPLKEQEHIKTKEVIPNKHFTEPPPRYSEASLVKKLEELGIGRPSTYASILSVLQDRKYVALEKKRFIPEELGRLVTVFLVGFFKKYVEYDFTAGLENELDEIAAGKLEWKTALNNFWRGFNHNIESVNEQKITEIINYLQKALDYHLFGEDKESKVCPSCKTGQLSLKLGKFGAFLACSNYPECTFKKSIVSGNDNNEDEGDPSTILNDNKILGTDQDGVEIYLKKGPYGPYIQLGEQCGKVKPKRTPVPANLKQSEITLEIALKLLNLPLKIGIHKDSGEEIIIGYSKFGPYIKYMCKFISVPKKYDFLNLSLNDAMKLIQNNKAKLEKKYG.

Residues 1–111 enclose the Toprim domain; it reads MKLVIVESPA…VESDDFFKRV (111 aa). Mg(2+)-binding residues include glutamate 7 and aspartate 80. The Topo IA-type catalytic domain maps to 132 to 568; it reads DTNLVNAQQA…FWRGFNHNIE (437 aa). An interaction with DNA region spans residues 166 to 171; the sequence is SAGRVQ. The active-site O-(5'-phospho-DNA)-tyrosine intermediate is the tyrosine 304. The C4-type zinc finger occupies 600 to 627; the sequence is CPSCKTGQLSLKLGKFGAFLACSNYPEC.

It belongs to the type IA topoisomerase family. As to quaternary structure, monomer. Requires Mg(2+) as cofactor.

The catalysed reaction is ATP-independent breakage of single-stranded DNA, followed by passage and rejoining.. In terms of biological role, releases the supercoiling and torsional tension of DNA, which is introduced during the DNA replication and transcription, by transiently cleaving and rejoining one strand of the DNA duplex. Introduces a single-strand break via transesterification at a target site in duplex DNA. The scissile phosphodiester is attacked by the catalytic tyrosine of the enzyme, resulting in the formation of a DNA-(5'-phosphotyrosyl)-enzyme intermediate and the expulsion of a 3'-OH DNA strand. The free DNA strand then undergoes passage around the unbroken strand, thus removing DNA supercoils. Finally, in the religation step, the DNA 3'-OH attacks the covalent intermediate to expel the active-site tyrosine and restore the DNA phosphodiester backbone. The polypeptide is DNA topoisomerase 1 (Rickettsia prowazekii (strain Madrid E)).